Here is a 137-residue protein sequence, read N- to C-terminus: Large ribosomal subunit protein uL14 (137 aa).

It belongs to the universal ribosomal protein uL14 family. Component of the large ribosomal subunit. Mature ribosomes consist of a small (40S) and a large (60S) subunit. The 40S subunit contains about 32 different proteins and 1 molecule of RNA (18S). The 60S subunit contains 45 different proteins and 3 molecules of RNA (25S, 5.8S and 5S).

The protein localises to the cytoplasm. Its function is as follows. Component of the ribosome, a large ribonucleoprotein complex responsible for the synthesis of proteins in the cell. The small ribosomal subunit (SSU) binds messenger RNAs (mRNAs) and translates the encoded message by selecting cognate aminoacyl-transfer RNA (tRNA) molecules. The large subunit (LSU) contains the ribosomal catalytic site termed the peptidyl transferase center (PTC), which catalyzes the formation of peptide bonds, thereby polymerizing the amino acids delivered by tRNAs into a polypeptide chain. The nascent polypeptides leave the ribosome through a tunnel in the LSU and interact with protein factors that function in enzymatic processing, targeting, and the membrane insertion of nascent chains at the exit of the ribosomal tunnel. In Candida albicans (strain SC5314 / ATCC MYA-2876) (Yeast), this protein is Large ribosomal subunit protein uL14.